Reading from the N-terminus, the 98-residue chain is Large ribosomal subunit protein uL23 (98 aa).

Belongs to the universal ribosomal protein uL23 family. In terms of assembly, part of the 50S ribosomal subunit. Contacts protein L29, and trigger factor when it is bound to the ribosome.

Functionally, one of the early assembly proteins it binds 23S rRNA. One of the proteins that surrounds the polypeptide exit tunnel on the outside of the ribosome. Forms the main docking site for trigger factor binding to the ribosome. In Sorangium cellulosum (strain So ce56) (Polyangium cellulosum (strain So ce56)), this protein is Large ribosomal subunit protein uL23.